Reading from the N-terminus, the 854-residue chain is Protein mono-ADP-ribosyltransferase PARP8 (854 aa).

Disordered stretches follow at residues 113-138 (NGEE…EFYY) and 291-310 (SYPP…EQDG). The segment covering 123–135 (VEEDSEGDNDSEE) has biased composition (acidic residues). C332, C367, C376, and C395 each carry ADP-ribosylcysteine. The PARP catalytic domain occupies 617-844 (EMTQAPYLEI…QEGGIHKEIL (228 aa)). The tract at residues 750-777 (QKVSAKDEPASSSKSSNTSQSQKKGQQS) is disordered. Residues 760 to 777 (SSSKSSNTSQSQKKGQQS) are compositionally biased toward low complexity.

The protein belongs to the ARTD/PARP family. Auto-mono-ADP-ribosylated.

It catalyses the reaction L-cysteinyl-[protein] + NAD(+) = S-(ADP-D-ribosyl)-L-cysteinyl-[protein] + nicotinamide + H(+). In terms of biological role, mono-ADP-ribosyltransferase that mediates mono-ADP-ribosylation of target proteins. The sequence is that of Protein mono-ADP-ribosyltransferase PARP8 from Homo sapiens (Human).